Here is a 323-residue protein sequence, read N- to C-terminus: Large ribosomal subunit protein uL10 (323 aa).

The segment at 298–323 (AAAAPAAAAEPEEEDDDDDFGMGALF) is disordered. Residues 307–317 (EPEEEDDDDDF) are compositionally biased toward acidic residues.

It belongs to the universal ribosomal protein uL10 family. In terms of assembly, P0 forms a pentameric complex by interaction with dimers of P1 and P2. Post-translationally, phosphorylated.

Functionally, ribosomal protein P0 is the functional equivalent of E.coli protein L10. This chain is Large ribosomal subunit protein uL10, found in Trypanosoma cruzi.